We begin with the raw amino-acid sequence, 238 residues long: Small ribosomal subunit protein eS4 (238 aa).

One can recognise an S4 RNA-binding domain in the interval 38–109 (IPLALVIRDV…DERSYYALVP (72 aa)).

Belongs to the eukaryotic ribosomal protein eS4 family.

This Pyrobaculum neutrophilum (strain DSM 2338 / JCM 9278 / NBRC 100436 / V24Sta) (Thermoproteus neutrophilus) protein is Small ribosomal subunit protein eS4.